The primary structure comprises 339 residues: MO25-like protein 3 (339 aa).

Belongs to the Mo25 family.

This chain is MO25-like protein 3 (mop-25.3), found in Caenorhabditis elegans.